The sequence spans 370 residues: Protein SUPPRESSOR OF NIM1 1 (370 aa).

The F-box domain maps to 1 to 43 (MALPWELEEDILSRLPPISLVRFRTVSKHWNSLFNDKTFINNH).

As to expression, ubiquitous, at low levels.

In terms of biological role, negatively regulates a plant defense signaling pathway which is independent of salicylic acid (SA) and systemic acquired resistance (SAR). Confers sensitivity to P.syringae and P.parasitica. This chain is Protein SUPPRESSOR OF NIM1 1 (SON1), found in Arabidopsis thaliana (Mouse-ear cress).